Here is a 107-residue protein sequence, read N- to C-terminus: Immunoglobulin kappa constant (107 aa).

An Ig-like domain is found at 6 to 103; it reads PTVSIFPPSS…STSPIVKSFN (98 aa). Cysteine 27 and cysteine 87 are oxidised to a cystine.

The polypeptide is Immunoglobulin kappa constant (Mus musculus (Mouse)).